The sequence spans 750 residues: von Willebrand factor A domain-containing protein DDB_G0292188 (750 aa).

One can recognise a VWFA domain in the interval 17-249; sequence EIKTVFNSDS…IKDDLLLDVV (233 aa). Composition is skewed to low complexity over residues 586–595 and 603–645; these read SINDNNNSFN and PFFE…SSAS. Positions 586-657 are disordered; that stretch reads SINDNNNSFN…PPPSQMLNEQ (72 aa).

This is von Willebrand factor A domain-containing protein DDB_G0292188 from Dictyostelium discoideum (Social amoeba).